A 36-amino-acid polypeptide reads, in one-letter code: Dermonecrotic toxin LgSicTox-beta-LOXN2 (36 aa).

The protein belongs to the arthropod phospholipase D family. Class II subfamily. Mg(2+) is required as a cofactor. Contains 2 disulfide bonds. Expressed by the venom gland.

It is found in the secreted. The enzyme catalyses an N-(acyl)-sphingosylphosphocholine = an N-(acyl)-sphingosyl-1,3-cyclic phosphate + choline. It catalyses the reaction an N-(acyl)-sphingosylphosphoethanolamine = an N-(acyl)-sphingosyl-1,3-cyclic phosphate + ethanolamine. The catalysed reaction is a 1-acyl-sn-glycero-3-phosphocholine = a 1-acyl-sn-glycero-2,3-cyclic phosphate + choline. It carries out the reaction a 1-acyl-sn-glycero-3-phosphoethanolamine = a 1-acyl-sn-glycero-2,3-cyclic phosphate + ethanolamine. Functionally, dermonecrotic toxins cleave the phosphodiester linkage between the phosphate and headgroup of certain phospholipids (sphingolipid and lysolipid substrates), forming an alcohol (often choline) and a cyclic phosphate. This toxin acts on sphingomyelin (SM). It may also act on ceramide phosphoethanolamine (CPE), lysophosphatidylcholine (LPC) and lysophosphatidylethanolamine (LPE), but not on lysophosphatidylserine (LPS), and lysophosphatidylglycerol (LPG). It acts by transphosphatidylation, releasing exclusively cyclic phosphate products as second products. Induces dermonecrosis, hemolysis, increased vascular permeability, edema, inflammatory response, and platelet aggregation. The chain is Dermonecrotic toxin LgSicTox-beta-LOXN2 from Loxosceles gaucho (Spider).